The chain runs to 260 residues: Arginine esterase (260 aa).

A signal peptide spans 1–17 (MWFLALCLAMSLGWTGA). The propeptide at 18–24 (EPHFQPR) is activation peptide. Positions 25 to 257 (IIGGRECLKN…HLMWIKDTMK (233 aa)) constitute a Peptidase S1 domain. Intrachain disulfides connect cysteine 31–cysteine 172, cysteine 50–cysteine 66, cysteine 151–cysteine 218, cysteine 183–cysteine 197, and cysteine 208–cysteine 233. Histidine 65 serves as the catalytic Charge relay system. Asparagine 79 carries N-linked (GlcNAc...) asparagine glycosylation. Aspartate 119 functions as the Charge relay system in the catalytic mechanism. Serine 212 (charge relay system) is an active-site residue.

Belongs to the peptidase S1 family. Kallikrein subfamily.

It carries out the reaction Preferential cleavage of Arg-|-Xaa bonds in small molecule substrates. Highly selective action to release kallidin (lysyl-bradykinin) from kininogen involves hydrolysis of Met-|-Xaa or Leu-|-Xaa.. In terms of biological role, this serine protease is found in dog seminal plasma, its exact physiological function is not known. This is Arginine esterase from Canis lupus familiaris (Dog).